Here is a 335-residue protein sequence, read N- to C-terminus: 3-dehydroquinate synthase (335 aa).

Residues 56–61 (DGEKYK), 90–94 (GVITD), 114–115 (TT), K127, K135, and 153–156 (FLKT) contribute to the NAD(+) site. Zn(2+)-binding residues include E168, H227, and H243.

The protein belongs to the sugar phosphate cyclases superfamily. Dehydroquinate synthase family. Requires NAD(+) as cofactor. It depends on Co(2+) as a cofactor. The cofactor is Zn(2+).

The protein resides in the cytoplasm. The enzyme catalyses 7-phospho-2-dehydro-3-deoxy-D-arabino-heptonate = 3-dehydroquinate + phosphate. It functions in the pathway metabolic intermediate biosynthesis; chorismate biosynthesis; chorismate from D-erythrose 4-phosphate and phosphoenolpyruvate: step 2/7. Its function is as follows. Catalyzes the conversion of 3-deoxy-D-arabino-heptulosonate 7-phosphate (DAHP) to dehydroquinate (DHQ). The polypeptide is 3-dehydroquinate synthase (Pyrococcus furiosus (strain ATCC 43587 / DSM 3638 / JCM 8422 / Vc1)).